We begin with the raw amino-acid sequence, 148 residues long: Deoxyuridine 5'-triphosphate nucleotidohydrolase (148 aa).

Substrate is bound by residues 68–70 (RSG), asparagine 81, 85–87 (TVD), and lysine 95.

This sequence belongs to the dUTPase family. Requires Mg(2+) as cofactor.

The enzyme catalyses dUTP + H2O = dUMP + diphosphate + H(+). It functions in the pathway pyrimidine metabolism; dUMP biosynthesis; dUMP from dCTP (dUTP route): step 2/2. This enzyme is involved in nucleotide metabolism: it produces dUMP, the immediate precursor of thymidine nucleotides and it decreases the intracellular concentration of dUTP so that uracil cannot be incorporated into DNA. This Caldanaerobacter subterraneus subsp. tengcongensis (strain DSM 15242 / JCM 11007 / NBRC 100824 / MB4) (Thermoanaerobacter tengcongensis) protein is Deoxyuridine 5'-triphosphate nucleotidohydrolase.